A 737-amino-acid chain; its full sequence is Dynein axonemal intermediate chain 7 homolog (737 aa).

Residues Met-1–Thr-15 show a composition bias toward polar residues. 3 disordered regions span residues Met-1 to Ala-61, Lys-274 to Glu-362, and Ser-410 to Pro-452. Basic and acidic residues-rich tracts occupy residues Arg-18–Ala-61, Val-276–Gln-316, and Glu-333–Lys-349. 2 stretches are compositionally biased toward polar residues: residues Asp-417–Ala-429 and Pro-441–Pro-451.

It belongs to the DNAI7 family.

The sequence is that of Dynein axonemal intermediate chain 7 homolog (AXP83.9) from Ciona intestinalis (Transparent sea squirt).